We begin with the raw amino-acid sequence, 782 residues long: ATP-dependent 6-phosphofructokinase, muscle type (782 aa).

An N-acetylthreonine modification is found at Thr2. The interval 2–390 (THEEHHAAKT…NWEVYKLLAH (389 aa)) is N-terminal catalytic PFK domain 1. Residues Gly25, 88–89 (RC), and 118–121 (GDGS) each bind ATP. Asp119 is a binding site for Mg(2+). Position 133 is a phosphoserine (Ser133). Residues 164 to 166 (SID), Arg201, 208 to 210 (MGR), Glu264, Arg292, and 298 to 301 (HVQR) each bind substrate. The active-site Proton acceptor is the Asp166. Ser377 is subject to Phosphoserine. An interdomain linker region spans residues 391–403 (IRPPVSKTSATMH). Residues 404–782 (TVAVMNVGAP…SRKRSGETSI (379 aa)) form a C-terminal regulatory PFK domain 2 region. Residues Arg473 and 530 to 534 (TVSNN) contribute to the beta-D-fructose 2,6-bisphosphate site. Ser532 carries O-linked (GlcNAc) serine glycosylation. Lys559 carries the post-translational modification N6-(2-hydroxyisobutyryl)lysine. Residues Arg568, 575–577 (MGG), Glu631, Arg657, and 663–666 (HMQQ) each bind beta-D-fructose 2,6-bisphosphate. Ser669 bears the Phosphoserine mark. Residue Arg737 coordinates beta-D-fructose 2,6-bisphosphate. Position 777 is a phosphoserine (Ser777).

The protein belongs to the phosphofructokinase type A (PFKA) family. ATP-dependent PFK group I subfamily. Eukaryotic two domain clade 'E' sub-subfamily. As to quaternary structure, homo- and heterotetramers. Phosphofructokinase (PFK) enzyme functions as a tetramer composed of different combinations of 3 types of subunits, called PFKM (M), PFKL (L) and PFKP (P). The composition of the PFK tetramer differs according to the tissue type it is present in. The kinetic and regulatory properties of the tetrameric enzyme are dependent on the subunit composition, hence can vary across tissues. Interacts (via C-terminus) with HK1 (via N-terminal spermatogenic cell-specific region). Mg(2+) is required as a cofactor. In terms of processing, glcNAcylation decreases enzyme activity.

It is found in the cytoplasm. It carries out the reaction beta-D-fructose 6-phosphate + ATP = beta-D-fructose 1,6-bisphosphate + ADP + H(+). The protein operates within carbohydrate degradation; glycolysis; D-glyceraldehyde 3-phosphate and glycerone phosphate from D-glucose: step 3/4. With respect to regulation, allosterically activated by ADP, AMP, or fructose 2,6-bisphosphate, and allosterically inhibited by ATP or citrate. Functionally, catalyzes the phosphorylation of D-fructose 6-phosphate to fructose 1,6-bisphosphate by ATP, the first committing step of glycolysis. In Canis lupus familiaris (Dog), this protein is ATP-dependent 6-phosphofructokinase, muscle type (PFKM).